A 148-amino-acid chain; its full sequence is Transcriptional regulator MraZ (148 aa).

2 consecutive SpoVT-AbrB domains span residues 5–51 (VATV…PLPE) and 80–123 (AHDI…NEAR).

Belongs to the MraZ family. In terms of assembly, forms oligomers.

The protein resides in the cytoplasm. It is found in the nucleoid. The sequence is that of Transcriptional regulator MraZ from Thiobacillus denitrificans (strain ATCC 25259 / T1).